Consider the following 428-residue polypeptide: MLLSKYFLPILKEEPSEAQVISHKLMLRSGMIMKQASGLYTWLPLGLKVLKNIENIVRSNMNKVGALEVLMPCIQPAHLWIESGRFEYYGKEMLKFQDRHDNTLLFGPTNEDMITDIFRRNIKSYKDLPKNLYHIQWKFRDEIRPRFGVMRGREFLMKDAYSFDINQENAVNTYNKMYKAYINTFRDLGVFAIPVIADNGPIGGNLSHEFHIIAETGESTIYYDKRFKILKDNPDIDVEEIKSWYAAAEEKHDVNKLSSFPEGITSSKGIEVGHIFYIGSKYSVNMNALINDEYGKLIPVEMSSYGIGISRLAAAIIEANCDKKGIIWPFSVAPFKVSLINLNIHDNKCVELAAKTDKELSNKNIEVLYDDTEARPGSKFATHDLIGSPYQVIIGPKKAANNIVELKDRKTGVLEDIEIENLINYIRI.

Belongs to the class-II aminoacyl-tRNA synthetase family. ProS type 2 subfamily. As to quaternary structure, homodimer.

Its subcellular location is the cytoplasm. It carries out the reaction tRNA(Pro) + L-proline + ATP = L-prolyl-tRNA(Pro) + AMP + diphosphate. Its function is as follows. Catalyzes the attachment of proline to tRNA(Pro) in a two-step reaction: proline is first activated by ATP to form Pro-AMP and then transferred to the acceptor end of tRNA(Pro). The protein is Proline--tRNA ligase of Rickettsia typhi (strain ATCC VR-144 / Wilmington).